The sequence spans 521 residues: Glutamyl-tRNA(Gln) amidotransferase subunit B, mitochondrial (521 aa).

Residues Met-1–Phe-22 constitute a mitochondrion transit peptide.

The protein belongs to the GatB/GatE family. GatB subfamily. In terms of assembly, subunit of the heterotrimeric GatCAB amidotransferase (AdT) complex, composed of A, B and C subunits.

The protein localises to the mitochondrion. The catalysed reaction is L-glutamyl-tRNA(Gln) + L-glutamine + ATP + H2O = L-glutaminyl-tRNA(Gln) + L-glutamate + ADP + phosphate + H(+). Functionally, allows the formation of correctly charged Gln-tRNA(Gln) through the transamidation of misacylated Glu-tRNA(Gln) in the mitochondria. The reaction takes place in the presence of glutamine and ATP through an activated gamma-phospho-Glu-tRNA(Gln). The chain is Glutamyl-tRNA(Gln) amidotransferase subunit B, mitochondrial from Cryptococcus neoformans var. neoformans serotype D (strain JEC21 / ATCC MYA-565) (Filobasidiella neoformans).